We begin with the raw amino-acid sequence, 280 residues long: MSALNLTVRVHPVVLFQVVDAFERRNADSHRVIGTLLGSVDKGVVEVTNCFCVPHKEHDDQVEAELSYALDMYDLNRKVNSNESVVGWWATGNDVTNHSSVIHEYYARECNNPVHLTVDTSLQGGRMGLRAYVCIQLGVPGGKSGCMFTPIPVELTSYEPETFGLKLLQKTVGVSPAHRPKTVPPMLDLAQISEASTKLQSLLDLILKYVDDVIAHKVTPDNAVGRQLLDLIHSVPHMTHEQFTQMFNANVRNLLLVITLSQLIKTQLQLNEKLTFLPAA.

The 131-residue stretch at 8-138 folds into the MPN domain; that stretch reads VRVHPVVLFQ…LRAYVCIQLG (131 aa).

This sequence belongs to the eIF-3 subunit F family. In terms of assembly, component of the eukaryotic translation initiation factor 3 (eIF-3) complex. The eIF-3 complex interacts with pix.

It localises to the cytoplasm. In terms of biological role, component of the eukaryotic translation initiation factor 3 (eIF-3) complex, which is involved in protein synthesis of a specialized repertoire of mRNAs and, together with other initiation factors, stimulates binding of mRNA and methionyl-tRNAi to the 40S ribosome. The eIF-3 complex specifically targets and initiates translation of a subset of mRNAs involved in cell proliferation. The protein is Eukaryotic translation initiation factor 3 subunit F-1 of Drosophila yakuba (Fruit fly).